The primary structure comprises 510 residues: Dentin matrix acidic phosphoprotein 1 (510 aa).

Positions 1 to 16 (MKTTILLMFLWGLSCA) are cleaved as a signal peptide. Positions 23–510 (QNTESKSSEE…QDDNDCQDGY (488 aa)) are disordered. 2 stretches are compositionally biased toward acidic residues: residues 61 to 77 (QANE…EVLG) and 101 to 119 (NKDD…DDDG). Basic and acidic residues-rich tracts occupy residues 123 to 180 (PEER…RPEG), 273 to 288 (RLPE…DSRT), and 299 to 328 (PDSK…RSPE). Residues 333–343 (VQDPSSESSQE) show a composition bias toward polar residues. Asn-351 is a glycosylation site (N-linked (GlcNAc...) asparagine). Over residues 358-367 (EALHESRGDN) the composition is skewed to basic and acidic residues. Residues 364 to 366 (RGD) carry the Cell attachment site motif. N-linked (GlcNAc...) asparagine glycosylation is present at Asn-370. Residues 407–417 (SESHESLRSSE) are compositionally biased toward basic and acidic residues. N-linked (GlcNAc...) asparagine glycosylation is found at Asn-427 and Asn-464. Over residues 481–499 (TEVESRKLTVDAYHNKPIG) the composition is skewed to basic and acidic residues. The span at 500–510 (DQDDNDCQDGY) shows a compositional bias: acidic residues.

In terms of assembly, interacts with importin alpha. Post-translationally, phosphorylated in the cytosol and extracellular matrix and unphosphorylated in the nucleus. Phosphorylation is necessary for nucleocytoplasmic transport and may be catalyzed by a nuclear isoform of CK2 and can be augmented by calcium. Phosphorylated (in vitro) by FAM20C in the extracellular medium at sites within the S-x-E/pS motif. In terms of tissue distribution, expressed in fetal brain, bone and tooth particularly in odontoblast, but not in ameloblast. Not expressed in liver and skin.

It is found in the nucleus. The protein resides in the cytoplasm. The protein localises to the secreted. It localises to the extracellular space. Its subcellular location is the extracellular matrix. Its function is as follows. May have a dual function during osteoblast differentiation. In the nucleus of undifferentiated osteoblasts, unphosphorylated form acts as a transcriptional component for activation of osteoblast-specific genes like osteocalcin. During the osteoblast to osteocyte transition phase it is phosphorylated and exported into the extracellular matrix, where it regulates nucleation of hydroxyapatite. This Bos taurus (Bovine) protein is Dentin matrix acidic phosphoprotein 1 (DMP1).